The primary structure comprises 231 residues: MSVGVWAVIPAAGRGVRFGSPVPKQYLPVVGRPLIVYTLEALAAHPAVCGLMVVVAEGDLAWSSWTEVAGKPLLTCSGGVTRAASVLSGLLALPQVVHADDFVLVHDAARPNVALSDLERLLEAGCAHPVGAILAVPVRDTLKRAGADGSIDGTEPRERLWRAFTPQLFRRSQLVRGLQVAAADGIEITDEAMVMERQGLRPLLVECAESNFKITTPDDLVRFEFELARRV.

It belongs to the IspD/TarI cytidylyltransferase family. IspD subfamily.

The catalysed reaction is 2-C-methyl-D-erythritol 4-phosphate + CTP + H(+) = 4-CDP-2-C-methyl-D-erythritol + diphosphate. It participates in isoprenoid biosynthesis; isopentenyl diphosphate biosynthesis via DXP pathway; isopentenyl diphosphate from 1-deoxy-D-xylulose 5-phosphate: step 2/6. Functionally, catalyzes the formation of 4-diphosphocytidyl-2-C-methyl-D-erythritol from CTP and 2-C-methyl-D-erythritol 4-phosphate (MEP). This chain is 2-C-methyl-D-erythritol 4-phosphate cytidylyltransferase, found in Xylella fastidiosa (strain 9a5c).